The following is a 340-amino-acid chain: Tetrathionate reductase subunit C (340 aa).

A run of 9 helical transmembrane segments spans residues 19-39, 57-77, 94-114, 128-148, 164-184, 195-215, 236-256, 266-286, and 306-326; these read WLPWAVQYFFFIGIAACAALF, ALLIAITCAITAPLALTADLH, WMPWGALFLPLFTGFLALWFL, VTKWLALASALCAVGLLIYTG, AFPVAMFLSALQAFFALMIVA, ILWGQIWTLAALGLVVAMWVS, YYAVGWVALWVCTLLFCSLAL, VLLVLSALALCWLMRWTLLIQ, and TDGWLAILGTFGLWIALLIII.

Belongs to the NrfD family. As to quaternary structure, probably composed of three subunits: TtrA, TtrB and TtrC.

The protein resides in the cell inner membrane. Part of a membrane-bound tetrathionate reductase that catalyzes the reduction of tetrathionate to thiosulfate. TtrC probably anchors TtrA and TtrB to the periplasmic face of the cytoplasmic membrane. May transfer electrons from membrane quinol to TtrB. During mice infection, the ability to use tetrathionate as an electron acceptor is a growth advantage for S.typhimurium over the competing microbiota in the lumen of the inflamed gut. The protein is Tetrathionate reductase subunit C (ttrC) of Salmonella typhimurium (strain LT2 / SGSC1412 / ATCC 700720).